The primary structure comprises 310 residues: Protein FIP2 (310 aa).

Residues 1-58 (MGFAPVTPAAVETYDPDVDHDDESNGLDGFRVRSKRSGKFSGGYSDSPREVGDGYGVR) are disordered. The segment covering 14-25 (YDPDVDHDDESN) has biased composition (acidic residues). Phosphoserine occurs at positions 77 and 105. 3 disordered regions span residues 115 to 135 (ATRL…GSGG), 152 to 171 (FKPK…LDYD), and 177 to 221 (DRAE…GSSS). Positions 208-221 (PRNTGASNGYGSSS) are enriched in polar residues.

Interacts with FRI. Interacts with WAV3.

This is Protein FIP2 from Arabidopsis thaliana (Mouse-ear cress).